The primary structure comprises 143 residues: Nucleoside diphosphate kinase (143 aa).

Lysine 11, phenylalanine 59, arginine 87, threonine 93, arginine 104, and asparagine 114 together coordinate ATP. Residue histidine 117 is the Pros-phosphohistidine intermediate of the active site.

This sequence belongs to the NDK family. Homotetramer. Mg(2+) is required as a cofactor.

It is found in the cytoplasm. It carries out the reaction a 2'-deoxyribonucleoside 5'-diphosphate + ATP = a 2'-deoxyribonucleoside 5'-triphosphate + ADP. The enzyme catalyses a ribonucleoside 5'-diphosphate + ATP = a ribonucleoside 5'-triphosphate + ADP. Functionally, major role in the synthesis of nucleoside triphosphates other than ATP. The ATP gamma phosphate is transferred to the NDP beta phosphate via a ping-pong mechanism, using a phosphorylated active-site intermediate. This chain is Nucleoside diphosphate kinase, found in Alteromonas mediterranea (strain DSM 17117 / CIP 110805 / LMG 28347 / Deep ecotype).